The following is a 317-amino-acid chain: Porphobilinogen deaminase (317 aa).

C245 is modified (S-(dipyrrolylmethanemethyl)cysteine).

It belongs to the HMBS family. In terms of assembly, monomer. Dipyrromethane is required as a cofactor.

The enzyme catalyses 4 porphobilinogen + H2O = hydroxymethylbilane + 4 NH4(+). It functions in the pathway porphyrin-containing compound metabolism; protoporphyrin-IX biosynthesis; coproporphyrinogen-III from 5-aminolevulinate: step 2/4. It participates in porphyrin-containing compound metabolism; chlorophyll biosynthesis. Tetrapolymerization of the monopyrrole PBG into the hydroxymethylbilane pre-uroporphyrinogen in several discrete steps. The protein is Porphobilinogen deaminase of Prochlorococcus marinus (strain MIT 9303).